Reading from the N-terminus, the 364-residue chain is Aminomethyltransferase (364 aa).

This sequence belongs to the GcvT family. As to quaternary structure, the glycine cleavage system is composed of four proteins: P, T, L and H.

The catalysed reaction is N(6)-[(R)-S(8)-aminomethyldihydrolipoyl]-L-lysyl-[protein] + (6S)-5,6,7,8-tetrahydrofolate = N(6)-[(R)-dihydrolipoyl]-L-lysyl-[protein] + (6R)-5,10-methylene-5,6,7,8-tetrahydrofolate + NH4(+). Its function is as follows. The glycine cleavage system catalyzes the degradation of glycine. This is Aminomethyltransferase from Proteus mirabilis (strain HI4320).